The chain runs to 129 residues: Protein yippee-like At5g53940 (129 aa).

The region spanning 12–109 (RSYRCRFCRT…LERGRIVDEI (98 aa)) is the Yippee domain. Residues Cys16, Cys19, Cys72, and Cys75 each contribute to the Zn(2+) site.

This sequence belongs to the yippee family.

The chain is Protein yippee-like At5g53940 from Arabidopsis thaliana (Mouse-ear cress).